The following is a 179-amino-acid chain: Ribosome maturation factor RimM (179 aa).

The PRC barrel domain occupies Lys96–Ile175.

This sequence belongs to the RimM family. Binds ribosomal protein uS19.

It localises to the cytoplasm. An accessory protein needed during the final step in the assembly of 30S ribosomal subunit, possibly for assembly of the head region. Essential for efficient processing of 16S rRNA. May be needed both before and after RbfA during the maturation of 16S rRNA. It has affinity for free ribosomal 30S subunits but not for 70S ribosomes. The chain is Ribosome maturation factor RimM from Sulfurimonas denitrificans (strain ATCC 33889 / DSM 1251) (Thiomicrospira denitrificans (strain ATCC 33889 / DSM 1251)).